Consider the following 331-residue polypeptide: Proline-rich protein 33 (331 aa).

Disordered stretches follow at residues 1–112 (MGPQ…SVPR), 128–185 (SLES…PKVA), and 204–247 (APEP…APAS). A compositionally biased stretch (pro residues) spans 94–105 (PEEPPVPRPPPG). The segment covering 149-169 (PPMAGPAAEAERVSSPAWASS) has biased composition (low complexity). Over residues 170–185 (PTPPSGPHPCPVPKVA) the composition is skewed to pro residues. Over residues 217 to 238 (EPEVPTPTEQEVPAPTEQEVPA) the composition is skewed to low complexity.

The polypeptide is Proline-rich protein 33 (PRR33) (Homo sapiens (Human)).